The sequence spans 27 residues: Alpha-amylase/trypsin inhibitor CM17 (27 aa).

Belongs to the protease inhibitor I6 (cereal trypsin/alpha-amylase inhibitor) family. As to expression, developing endosperm.

The protein localises to the secreted. Its function is as follows. Alpha-amylase/trypsin inhibitor. It could be involved in insect defense mechanisms. This is Alpha-amylase/trypsin inhibitor CM17 from Triticum aestivum (Wheat).